The following is a 194-amino-acid chain: Putative 3-methyladenine DNA glycosylase (194 aa).

This sequence belongs to the DNA glycosylase MPG family.

The chain is Putative 3-methyladenine DNA glycosylase from Synechococcus elongatus (strain ATCC 33912 / PCC 7942 / FACHB-805) (Anacystis nidulans R2).